Consider the following 597-residue polypeptide: Arginine--tRNA ligase (597 aa).

Positions 23–32 (QAAAARQASQ) are enriched in low complexity. The tract at residues 23–43 (QAAAARQASQPLDPQLAPASK) is disordered. The 'HIGH' region motif lies at 137 to 147 (PNIAKEMHVGH).

Belongs to the class-I aminoacyl-tRNA synthetase family. As to quaternary structure, monomer.

It localises to the cytoplasm. It carries out the reaction tRNA(Arg) + L-arginine + ATP = L-arginyl-tRNA(Arg) + AMP + diphosphate. The protein is Arginine--tRNA ligase of Synechococcus sp. (strain WH7803).